Consider the following 375-residue polypeptide: Probable sugar phosphate/phosphate translocator At3g17430 (375 aa).

10 consecutive transmembrane segments (helical) span residues 9-29 (LVLTYIYLLIYIILSSGVILY), 43-63 (LPITLTMIHMGFAGFVAFLLI), 76-96 (FEIYATCVVPISAFFASSLWF), 106-126 (VAFIQMLKALMPVATFIMAVV), 140-160 (MLLVSVGVVISSYGEIHFNIV), 163-183 (VYQVTGIFAEALRLVLTQVLL), 193-213 (ITSLYYIAPCSFVFLALPWYV), 229-249 (WIFFSNALCALALNFSIFLVI), 257-276 (IRVAGVLKDWILIALSTVIF), and 280-302 (TITGLNITGYAIALCGVVMYNYI). Residues 328 to 348 (EKKSSDKFNPNDSVEIPRVGG) form a disordered region.

It belongs to the TPT transporter family. TPT (TC 2.A.7.9) subfamily.

It localises to the membrane. The sequence is that of Probable sugar phosphate/phosphate translocator At3g17430 from Arabidopsis thaliana (Mouse-ear cress).